A 209-amino-acid chain; its full sequence is Large ribosomal subunit protein uL4 (209 aa).

The tract at residues 45-78 is disordered; it reads RQGTHKAKERAEVAGSTRKIKKQKGTGTARAGSA.

This sequence belongs to the universal ribosomal protein uL4 family. Part of the 50S ribosomal subunit.

In terms of biological role, one of the primary rRNA binding proteins, this protein initially binds near the 5'-end of the 23S rRNA. It is important during the early stages of 50S assembly. It makes multiple contacts with different domains of the 23S rRNA in the assembled 50S subunit and ribosome. Its function is as follows. Forms part of the polypeptide exit tunnel. The sequence is that of Large ribosomal subunit protein uL4 from Flavobacterium psychrophilum (strain ATCC 49511 / DSM 21280 / CIP 103535 / JIP02/86).